A 320-amino-acid polypeptide reads, in one-letter code: Glycerol-3-phosphate dehydrogenase [NAD(P)+] (320 aa).

3 residues coordinate NADPH: phenylalanine 11, arginine 30, and lysine 102. Sn-glycerol 3-phosphate is bound by residues lysine 102, glycine 130, and serine 132. Alanine 134 is a binding site for NADPH. 5 residues coordinate sn-glycerol 3-phosphate: lysine 185, aspartate 238, serine 248, arginine 249, and asparagine 250. Lysine 185 serves as the catalytic Proton acceptor. Position 249 (arginine 249) interacts with NADPH. Glutamate 270 is an NADPH binding site.

The protein belongs to the NAD-dependent glycerol-3-phosphate dehydrogenase family.

Its subcellular location is the cytoplasm. It carries out the reaction sn-glycerol 3-phosphate + NAD(+) = dihydroxyacetone phosphate + NADH + H(+). The catalysed reaction is sn-glycerol 3-phosphate + NADP(+) = dihydroxyacetone phosphate + NADPH + H(+). The protein operates within membrane lipid metabolism; glycerophospholipid metabolism. In terms of biological role, catalyzes the reduction of the glycolytic intermediate dihydroxyacetone phosphate (DHAP) to sn-glycerol 3-phosphate (G3P), the key precursor for phospholipid synthesis. This Roseobacter denitrificans (strain ATCC 33942 / OCh 114) (Erythrobacter sp. (strain OCh 114)) protein is Glycerol-3-phosphate dehydrogenase [NAD(P)+].